The chain runs to 127 residues: Calcitonin receptor-stimulating peptide 1 (127 aa).

A signal peptide spans 1–25 (MGFWKFSPFLVLGILALYQVGFLQA). Residues 26 to 79 (APFRSALENPPDSGVRNEEELRLLLAAVMKDYMQMKTHELEQEQETEGSRVAVQ) constitute a propeptide that is removed on maturation. Residues Cys-83 and Cys-88 are joined by a disulfide bond.

It belongs to the calcitonin family.

It is found in the secreted. Its function is as follows. Stimulates cAMP production in porcine kidney cell line LLC-PK1 via the calcitonin receptor (CT) but not via the CT-like (CL) receptor. This Canis lupus familiaris (Dog) protein is Calcitonin receptor-stimulating peptide 1 (CRSP1).